The chain runs to 64 residues: Putative antitoxin VapB4 (64 aa).

The protein belongs to the UPF0165 family.

In terms of biological role, possibly the antitoxin component of a type II toxin-antitoxin (TA) system. Its cognate toxin is VapC4 (Potential). The sequence is that of Putative antitoxin VapB4 (vapB4) from Archaeoglobus fulgidus (strain ATCC 49558 / DSM 4304 / JCM 9628 / NBRC 100126 / VC-16).